A 306-amino-acid polypeptide reads, in one-letter code: tRNA dimethylallyltransferase (306 aa).

9 to 16 (GPTAIGKT) is an ATP binding site. 11–16 (TAIGKT) is a binding site for substrate. Residues 34-37 (DSMQ) form an interaction with substrate tRNA region.

The protein belongs to the IPP transferase family. In terms of assembly, monomer. Mg(2+) serves as cofactor.

It catalyses the reaction adenosine(37) in tRNA + dimethylallyl diphosphate = N(6)-dimethylallyladenosine(37) in tRNA + diphosphate. Catalyzes the transfer of a dimethylallyl group onto the adenine at position 37 in tRNAs that read codons beginning with uridine, leading to the formation of N6-(dimethylallyl)adenosine (i(6)A). This chain is tRNA dimethylallyltransferase, found in Lactobacillus acidophilus (strain ATCC 700396 / NCK56 / N2 / NCFM).